The primary structure comprises 576 residues: Capsid protein (576 aa).

The tract at residues 489 to 576 (GYREPKPKPG…GLLALLKEKK (88 aa)) is disordered. Residues 496–509 (KPGPPETLIPPGAP) are compositionally biased toward pro residues. Residues 520 to 537 (TESDDFDTGDSEEEEEDH) show a composition bias toward acidic residues. The span at 538–551 (QDPRWVRESLDKLT) shows a compositional bias: basic and acidic residues. Low complexity predominate over residues 562 to 576 (QQLGKGLLALLKEKK).

It belongs to the anelloviridae capsid protein family.

It is found in the virion. Self-assembles to form an icosahedral capsid with a T=1 symmetry, about 30 nm in diameter, and consisting of 60 capsid proteins. The capsid encapsulates the genomic DNA. Capsid protein is involved in attachment and entry into the host cell. The protein is Capsid protein of Torque teno canis virus (isolate Cf-TTV10).